A 68-amino-acid chain; its full sequence is uncharacterized protein (68 aa).

This is an uncharacterized protein from Dryophytes versicolor (chameleon treefrog).